A 120-amino-acid polypeptide reads, in one-letter code: Putative non-specific lipid-transfer protein 14 (120 aa).

An N-terminal signal peptide occupies residues 1 to 22 (MTRSFSPVVSLFLLLLQTICSA). 4 disulfide bridges follow: Cys-30/Cys-80, Cys-40/Cys-57, Cys-58/Cys-102, and Cys-78/Cys-116.

The protein belongs to the plant LTP family.

Plant non-specific lipid-transfer proteins transfer phospholipids as well as galactolipids across membranes. May play a role in wax or cutin deposition in the cell walls of expanding epidermal cells and certain secretory tissues. The polypeptide is Putative non-specific lipid-transfer protein 14 (LTP14) (Arabidopsis thaliana (Mouse-ear cress)).